A 369-amino-acid chain; its full sequence is Glycolate oxidase 5 (369 aa).

The FMN hydroxy acid dehydrogenase domain occupies 1-360 (MGEITNVTEY…TRNHVITEAD (360 aa)). Glyoxylate is bound at residue Tyr25. FMN-binding positions include 78–80 (PSA), Ser107, 128–130 (QLY), and Thr156. Tyr130 serves as a coordination point for glyoxylate. Residue Arg165 participates in glyoxylate binding. Positions 231 and 253 each coordinate FMN. Glyoxylate-binding residues include His255 and Arg258. His255 (proton acceptor) is an active-site residue. Residues 286 to 290 (DGGVR) and 309 to 310 (GR) contribute to the FMN site. The Microbody targeting signal motif lies at 367-369 (SRL).

The protein belongs to the FMN-dependent alpha-hydroxy acid dehydrogenase family. Homotetramer. FMN serves as cofactor.

It is found in the peroxisome. The catalysed reaction is glycolate + O2 = glyoxylate + H2O2. The protein operates within photosynthesis; photorespiration; glycine from 2-phosphoglycolate: step 2/3. Catalyzes the oxidation of glycolate to glyoxylate, with a reduction of O2 to H2O2. Is a key enzyme in photorespiration in green plants. The sequence is that of Glycolate oxidase 5 (GLO5) from Oryza sativa subsp. japonica (Rice).